We begin with the raw amino-acid sequence, 72 residues long: Enterobactin biosynthesis protein YbdZ (72 aa).

This sequence belongs to the MbtH-like family.

Involved in the biosynthesis of the siderophore enterobactin (enterochelin), which is a macrocyclic trimeric lactone of N-(2,3-dihydroxybenzoyl)-serine. Plays a role in the catalytic function of EntF. It is required for adenylation of amino acids in non-ribosomal peptide biosynthesis. In Escherichia coli (strain K12), this protein is Enterobactin biosynthesis protein YbdZ.